We begin with the raw amino-acid sequence, 320 residues long: Ribonuclease Z (320 aa).

Positions 62, 64, 66, 67, 139, 210, and 268 each coordinate Zn(2+). The active-site Proton acceptor is Asp-66.

It belongs to the RNase Z family. In terms of assembly, homodimer. Zn(2+) serves as cofactor.

It carries out the reaction Endonucleolytic cleavage of RNA, removing extra 3' nucleotides from tRNA precursor, generating 3' termini of tRNAs. A 3'-hydroxy group is left at the tRNA terminus and a 5'-phosphoryl group is left at the trailer molecule.. Its function is as follows. Zinc phosphodiesterase, which displays some tRNA 3'-processing endonuclease activity. Probably involved in tRNA maturation, by removing a 3'-trailer from precursor tRNA. The polypeptide is Ribonuclease Z (Cyanothece sp. (strain PCC 7425 / ATCC 29141)).